The following is a 61-amino-acid chain: Small ribosomal subunit protein uS14 (61 aa).

The Zn(2+) site is built by cysteine 24, cysteine 27, cysteine 40, and cysteine 43.

This sequence belongs to the universal ribosomal protein uS14 family. Zinc-binding uS14 subfamily. Part of the 30S ribosomal subunit. Contacts proteins S3 and S10. It depends on Zn(2+) as a cofactor.

In terms of biological role, binds 16S rRNA, required for the assembly of 30S particles and may also be responsible for determining the conformation of the 16S rRNA at the A site. The polypeptide is Small ribosomal subunit protein uS14 (Geobacter metallireducens (strain ATCC 53774 / DSM 7210 / GS-15)).